Consider the following 189-residue polypeptide: Interferon alpha-1 (189 aa).

The N-terminal stretch at 1-23 (MARLCAFLMVLAVLSYWPTCSLG) is a signal peptide. 2 disulfide bridges follow: Cys24–Cys122 and Cys52–Cys162. N-linked (GlcNAc...) asparagine glycosylation is present at Asn101.

Belongs to the alpha/beta interferon family. As to quaternary structure, interacts with CR2. Post-translationally, glycosylated.

Its subcellular location is the secreted. Produced by macrophages, IFN-alpha have antiviral activities. Interferon stimulates the production of two enzymes: a protein kinase and an oligoadenylate synthetase. In Mus musculus (Mouse), this protein is Interferon alpha-1 (Ifna1).